A 592-amino-acid chain; its full sequence is MSQIKIELIKSINDLNSRGLLLSSKWSSEQLNGLSPTILATPLTNEEQLSIISQPSISSPPIGSNEYYKYILAKNYFDLKEYRRCSDVLIDCNKYQLPIFLRSYATYLAIEKRREEDIIEQQAQQQQQQQQAQQQAQQAQQESQQNDKNNDTNNNNKTDQQQQQQQQQKIEQCQEFKQLFQFYKKLYIENKKDMDGFLLYFYSMLLKKQRDFTMARKVLIESVHKYPCNWSAWSDLSSLCSDSADIIMQLSLPDHFMKDFFLAHFKLELQQNNESLVIYQQLSRTLFTQSTYILAQTAIGNYNLRAYDIGEELFERLIELEPNRLENIDIYSNILYVRDKKASLSMLAHKAMKIEKYCPETCCIIGNYYSLKLEHDKAILYFQRALKLNDRYLSAWTLIGHEFLEIKNVSAAINAYRKAVDINPRDYRAWYGLGQTYQLLKLPLYSLYYFKKATTLRPYDPRMWCAAGGCYEFIERIPEAIKCYERAEENYDRERVAINKLAKLYQEIQNNEKAAFYYKKNLYYCDQEKIDGQEIIDALLFLANFYKNQNQTQSEQYCLRLLDYAGPEKEEAKSILREIHSKSKLSSKSKPK.

TPR repeat units lie at residues 66 to 99, 160 to 193, 291 to 324, 359 to 392, 393 to 426, 428 to 460, 461 to 494, and 496 to 528; these read EYYKYILAKNYFDLKEYRRCSDVLIDCNKYQLPI, QQQQQQQQQKIEQCQEFKQLFQFYKKLYIENKKD, TYILAQTAIGNYNLRAYDIGEELFERLIELEPNR, PETCCIIGNYYSLKLEHDKAILYFQRALKLNDRY, LSAWTLIGHEFLEIKNVSAAINAYRKAVDINPRD, RAWYGLGQTYQLLKLPLYSLYYFKKATTLRPYD, PRMWCAAGGCYEFIERIPEAIKCYERAEENYDRE, and VAINKLAKLYQEIQNNEKAAFYYKKNLYYCDQE. A disordered region spans residues 129–166; the sequence is QQQAQQQAQQAQQESQQNDKNNDTNNNNKTDQQQQQQQ.

Belongs to the APC8/CDC23 family. As to quaternary structure, the APC/C is composed of at least 13 subunits that stay tightly associated throughout the cell cycle: anapc1, anapc2, anapc3, anapc4, anapc5, anapc6, anapc7, anapc8, anapc10, anapc11, cdc20, cdc26 and cdh1.

It localises to the nucleus. It functions in the pathway protein modification; protein ubiquitination. In terms of biological role, component of the anaphase promoting complex/cyclosome (APC/C), a cell cycle-regulated E3 ubiquitin-protein ligase complex that controls progression through mitosis and the G1 phase of the cell cycle. This Dictyostelium discoideum (Social amoeba) protein is Anaphase-promoting complex subunit 8 (anapc8).